We begin with the raw amino-acid sequence, 382 residues long: MKITNITTYRLPPRWMFLKIETDEGIVGWGEPVIEGRARTVEAAVHEFGDYLIGQDPARINDLWQVMYRGGFYRGGPIMMSAIAGIDQALWDIKGKVLNAPVWQLMGGLVRDKIKAYSWVGGDRPAEVIDGIKKLRGIGFDTFKLNGCEEMGIIDNSRAVDAAVNTVAQIREAFGNEIEFGLDFHGRVSAPMAKVLIKELEPYRPLFIEEPVLAEQAEYYPRLAAQTHIPIAAGERMFSRFEFKRVLEAGGVAILQPDLSHAGGITECYKIAGMAEAYDVGLAPHCPLGPIALAACLHVDFVSHNAVFQEQSMGIHYNKGAELLDFVKNKEDFNMEGGFFKPLMKPGLGVEIDEARVIELSKNAPDWRNPLWRYEDGSVAEW.

Position 183 (aspartate 183) interacts with Mg(2+). Histidine 185 functions as the Proton donor in the catalytic mechanism. Mg(2+) contacts are provided by glutamate 209 and glutamate 235. Catalysis depends on histidine 285, which acts as the Proton acceptor.

Belongs to the mandelate racemase/muconate lactonizing enzyme family. GalD subfamily. Mg(2+) serves as cofactor.

It carries out the reaction D-galactonate = 2-dehydro-3-deoxy-D-galactonate + H2O. Its pathway is carbohydrate acid metabolism; D-galactonate degradation; D-glyceraldehyde 3-phosphate and pyruvate from D-galactonate: step 1/3. Catalyzes the dehydration of D-galactonate to 2-keto-3-deoxy-D-galactonate. The polypeptide is D-galactonate dehydratase (Klebsiella pneumoniae subsp. pneumoniae (strain ATCC 700721 / MGH 78578)).